A 354-amino-acid chain; its full sequence is Selenide, water dikinase (354 aa).

C23 is a catalytic residue. ATP contacts are provided by residues K26 and 54–56 (TSD). Position 57 (D57) interacts with Mg(2+). ATP-binding positions include D74, D97, and 145 to 147 (GHS). D97 contributes to the Mg(2+) binding site. D233 lines the Mg(2+) pocket.

Belongs to the selenophosphate synthase 1 family. Class I subfamily. Homodimer. Mg(2+) is required as a cofactor.

The catalysed reaction is hydrogenselenide + ATP + H2O = selenophosphate + AMP + phosphate + 2 H(+). In terms of biological role, synthesizes selenophosphate from selenide and ATP. The protein is Selenide, water dikinase of Burkholderia pseudomallei (strain K96243).